Reading from the N-terminus, the 360-residue chain is Phosphate acyltransferase (360 aa).

The protein belongs to the PlsX family. In terms of assembly, homodimer. Probably interacts with PlsY.

It localises to the cytoplasm. The enzyme catalyses a fatty acyl-[ACP] + phosphate = an acyl phosphate + holo-[ACP]. The protein operates within lipid metabolism; phospholipid metabolism. Functionally, catalyzes the reversible formation of acyl-phosphate (acyl-PO(4)) from acyl-[acyl-carrier-protein] (acyl-ACP). This enzyme utilizes acyl-ACP as fatty acyl donor, but not acyl-CoA. In Thermobifida fusca (strain YX), this protein is Phosphate acyltransferase.